Here is a 520-residue protein sequence, read N- to C-terminus: GMP synthase [glutamine-hydrolyzing] (520 aa).

Residues 13–205 form the Glutamine amidotransferase type-1 domain; the sequence is KIIVLDYGSQ…ALNICKAKGD (193 aa). Cys90 serves as the catalytic Nucleophile. Residues His179 and Glu181 contribute to the active site. One can recognise a GMPS ATP-PPase domain in the interval 206–395; it reads WSMDNFIDMQ…LGMPDHIVWR (190 aa). 233–239 lines the ATP pocket; the sequence is SGGVDSS.

In terms of assembly, homodimer.

It carries out the reaction XMP + L-glutamine + ATP + H2O = GMP + L-glutamate + AMP + diphosphate + 2 H(+). Its pathway is purine metabolism; GMP biosynthesis; GMP from XMP (L-Gln route): step 1/1. Functionally, catalyzes the synthesis of GMP from XMP. This chain is GMP synthase [glutamine-hydrolyzing], found in Streptococcus pneumoniae serotype 2 (strain D39 / NCTC 7466).